Here is a 105-residue protein sequence, read N- to C-terminus: Large ribosomal subunit protein eL30 (105 aa).

It belongs to the eukaryotic ribosomal protein eL30 family.

The sequence is that of Large ribosomal subunit protein eL30 (rpl30e) from Methanococcus vannielii (strain ATCC 35089 / DSM 1224 / JCM 13029 / OCM 148 / SB).